A 131-amino-acid polypeptide reads, in one-letter code: Profilin (131 aa).

It belongs to the profilin family. As to quaternary structure, occurs in many kinds of cells as a complex with monomeric actin in a 1:1 ratio.

It is found in the cytoplasm. Its subcellular location is the cytoskeleton. Its function is as follows. Binds to actin and affects the structure of the cytoskeleton. At high concentrations, profilin prevents the polymerization of actin, whereas it enhances it at low concentrations. By binding to PIP2, it inhibits the formation of IP3 and DG. The polypeptide is Profilin (Prunus avium (Cherry)).